A 438-amino-acid polypeptide reads, in one-letter code: Histidinol dehydrogenase (438 aa).

NAD(+) is bound by residues tyrosine 137, glutamine 198, and asparagine 221. Positions 244, 266, and 269 each coordinate substrate. Zn(2+) is bound by residues glutamine 266 and histidine 269. Residues glutamate 334 and histidine 335 each act as proton acceptor in the active site. Residues histidine 335, aspartate 368, glutamate 422, and histidine 427 each coordinate substrate. Aspartate 368 contributes to the Zn(2+) binding site. Histidine 427 provides a ligand contact to Zn(2+).

It belongs to the histidinol dehydrogenase family. Zn(2+) serves as cofactor.

The enzyme catalyses L-histidinol + 2 NAD(+) + H2O = L-histidine + 2 NADH + 3 H(+). It functions in the pathway amino-acid biosynthesis; L-histidine biosynthesis; L-histidine from 5-phospho-alpha-D-ribose 1-diphosphate: step 9/9. Functionally, catalyzes the sequential NAD-dependent oxidations of L-histidinol to L-histidinaldehyde and then to L-histidine. The polypeptide is Histidinol dehydrogenase (Aromatoleum aromaticum (strain DSM 19018 / LMG 30748 / EbN1) (Azoarcus sp. (strain EbN1))).